Here is a 443-residue protein sequence, read N- to C-terminus: Exodeoxyribonuclease 7 large subunit (443 aa).

The protein belongs to the XseA family. Heterooligomer composed of large and small subunits.

The protein resides in the cytoplasm. The catalysed reaction is Exonucleolytic cleavage in either 5'- to 3'- or 3'- to 5'-direction to yield nucleoside 5'-phosphates.. Functionally, bidirectionally degrades single-stranded DNA into large acid-insoluble oligonucleotides, which are then degraded further into small acid-soluble oligonucleotides. The protein is Exodeoxyribonuclease 7 large subunit of Vibrio campbellii (strain ATCC BAA-1116).